Reading from the N-terminus, the 29-residue chain is Kalata-B15 (29 aa).

The cyclopeptide (Gly-Asp) cross-link spans 1 to 29 (GLPVCGESCFGGSCYTPGCSCTWPICTRD). 3 disulfide bridges follow: Cys-5-Cys-19, Cys-9-Cys-21, and Cys-14-Cys-26.

Post-translationally, this is a cyclic peptide.

Probably participates in a plant defense mechanism. The protein is Kalata-B15 of Oldenlandia affinis.